We begin with the raw amino-acid sequence, 92 residues long: UPF0250 protein CGSHiEE_03170 (92 aa).

Belongs to the UPF0250 family.

This is UPF0250 protein CGSHiEE_03170 from Haemophilus influenzae (strain PittEE).